The primary structure comprises 267 residues: Large ribosomal subunit protein mL57 (267 aa).

Residues serine 43–serine 54 show a composition bias toward low complexity. The disordered stretch occupies residues serine 43 to methionine 73.

It belongs to the ribonuclease III family. Mitochondrion-specific ribosomal protein mL57 subfamily. Component of the mitochondrial large ribosomal subunit (mt-LSU). Mature N.crassa 74S mitochondrial ribosomes consist of a small (37S) and a large (54S) subunit. The 37S small subunit contains a 16S ribosomal RNA (16S mt-rRNA) and 32 different proteins. The 54S large subunit contains a 23S rRNA (23S mt-rRNA) and 42 different proteins. mL57 forms a heterodimer with mL44 and stabilizes rRNA expansion segments 1/2 at a membrane-facing protuberance close to the point of attachment of the ribosome to the translocon in the membrane.

The protein localises to the mitochondrion. Functionally, component of the mitochondrial ribosome (mitoribosome), a dedicated translation machinery responsible for the synthesis of mitochondrial genome-encoded proteins, including at least some of the essential transmembrane subunits of the mitochondrial respiratory chain. The mitoribosomes are attached to the mitochondrial inner membrane and translation products are cotranslationally integrated into the membrane. This chain is Large ribosomal subunit protein mL57 (mrpl15), found in Neurospora crassa (strain ATCC 24698 / 74-OR23-1A / CBS 708.71 / DSM 1257 / FGSC 987).